A 258-amino-acid chain; its full sequence is UPF0246 protein Sden_2729 (258 aa).

It belongs to the UPF0246 family.

The protein is UPF0246 protein Sden_2729 of Shewanella denitrificans (strain OS217 / ATCC BAA-1090 / DSM 15013).